Reading from the N-terminus, the 34-residue chain is uncharacterized protein (34 aa).

Residues 1–12 (MFSHFEVSENRP) show a composition bias toward basic and acidic residues. Positions 1–21 (MFSHFEVSENRPRKQPRRKRI) are disordered.

This is an uncharacterized protein from Saccharomyces cerevisiae (strain ATCC 204508 / S288c) (Baker's yeast).